The chain runs to 748 residues: Elongation factor G, mitochondrial (748 aa).

The N-terminal 14 residues, 1 to 14 (MTISSFLRVRHSLA), are a transit peptide targeting the mitochondrion. Residues 40-318 (ERIRNIGISA…VLNYLPHPGE (279 aa)) enclose the tr-type G domain. GTP contacts are provided by residues 49 to 56 (AHIDSGKT), 116 to 120 (DTPGH), and 170 to 173 (NKLD).

The protein belongs to the TRAFAC class translation factor GTPase superfamily. Classic translation factor GTPase family. EF-G/EF-2 subfamily.

The protein resides in the mitochondrion. It functions in the pathway protein biosynthesis; polypeptide chain elongation. Mitochondrial GTPase that catalyzes the GTP-dependent ribosomal translocation step during translation elongation. During this step, the ribosome changes from the pre-translocational (PRE) to the post-translocational (POST) state as the newly formed A-site-bound peptidyl-tRNA and P-site-bound deacylated tRNA move to the P and E sites, respectively. Catalyzes the coordinated movement of the two tRNA molecules, the mRNA and conformational changes in the ribosome. The protein is Elongation factor G, mitochondrial of Aedes aegypti (Yellowfever mosquito).